A 105-amino-acid chain; its full sequence is Large ribosomal subunit protein bL21 (105 aa).

It belongs to the bacterial ribosomal protein bL21 family. In terms of assembly, part of the 50S ribosomal subunit. Contacts protein L20.

In terms of biological role, this protein binds to 23S rRNA in the presence of protein L20. The sequence is that of Large ribosomal subunit protein bL21 from Thermotoga maritima (strain ATCC 43589 / DSM 3109 / JCM 10099 / NBRC 100826 / MSB8).